A 414-amino-acid polypeptide reads, in one-letter code: COUP transcription factor 2 (414 aa).

The interval 1–72 is disordered; it reads MAMVVSTWRD…PGGPGSDKQQ (72 aa). Residues 27 to 37 show a composition bias toward pro residues; it reads PPVPGPPPGAP. Low complexity predominate over residues 38 to 57; the sequence is HTPQTPGQGGPASTPAQTAA. A Phosphothreonine modification is found at Thr51. A compositionally biased stretch (gly residues) spans 58–67; that stretch reads GGQGGPGGPG. Residues 76-151 constitute a DNA-binding region (nuclear receptor); it reads HIECVVCGDK…VGMRREAVQR (76 aa). 2 consecutive NR C4-type zinc fingers follow at residues 79–99 and 115–139; these read CVVC…CEGC and CRAN…LKKC. An interaction with ZFPM2 region spans residues 117-414; it reads ANRNCPIDQH…SFNWPYMAIQ (298 aa). Residues 177–403 form the NR LBD domain; sequence YLSGYISLLL…TLIRDMLLSG (227 aa). Positions 337–414 are important for dimerization; sequence LQEKSQCALE…SFNWPYMAIQ (78 aa).

The protein belongs to the nuclear hormone receptor family. NR2 subfamily. In terms of assembly, interacts with SQSTM1. Binds DNA as a dimer; homodimer or heterodimer with NR2F6. Interacts with NCOA1, NCOA2, NCOA3 and PPARGC1A. Interacts with ZFPM2.

Its subcellular location is the nucleus. Ligand-activated transcription factor. Activated by high concentrations of 9-cis-retinoic acid and all-trans-retinoic acid, but not by dexamethasone, cortisol or progesterone (in vitro). Regulation of the apolipoprotein A-I gene transcription. Binds to DNA site A. May be required to establish ovary identity during early gonad development. This chain is COUP transcription factor 2 (NR2F2), found in Bos taurus (Bovine).